The sequence spans 664 residues: Cyclic nucleotide-gated channel alpha-2 (664 aa).

A compositionally biased stretch (polar residues) spans 1–11; sequence MTEKTNGVKSS. The tract at residues 1 to 49 is disordered; that stretch reads MTEKTNGVKSSPANNHNHHAPPAIKANGKDDHRTSSRPHSAADDDTSSE. The Cytoplasmic segment spans residues 1–144; sequence MTEKTNGVKS…PAGDWYYCWL (144 aa). The span at 12 to 23 shows a compositional bias: low complexity; that stretch reads PANNHNHHAPPA. A helical transmembrane segment spans residues 145-166; that stretch reads FVIAMPVLYNWCLLVARACFSD. Over 167–176 the chain is Extracellular; that stretch reads LQKGYYLVWL. The helical transmembrane segment at 177-197 threads the bilayer; the sequence is VLDYVSDVVYIADLFIRLRTG. Residues 198-222 lie on the Cytoplasmic side of the membrane; sequence FLEQGLLVKDTKKLRDNYIHTLQFK. A helical membrane pass occupies residues 223–241; sequence LDVASIIPTDLIYFAVDIH. At 242–246 the chain is on the extracellular side; it reads SPEVR. Residues 247-265 form a helical membrane-spanning segment; it reads FNRLLHFARMFEFFDRTET. Over 266-272 the chain is Cytoplasmic; that stretch reads RTNYPNI. An ion conduction pathway region spans residues 270-378; it reads PNIFRISNLV…GNVGSMISNM (109 aa). Residues 273–296 traverse the membrane as a helical segment; sequence FRISNLVLYILVIIHWNACIYYAI. Residues 297 to 319 are Extracellular-facing; sequence SKSIGFGVDTWVYPNITDPEYGY. The next 2 membrane-spanning stretches (helical) occupy residues 320-354 and 355-379; these read LAREYIYCLYWSTLTLTTIGETPPPVKDEEYLFVI and FDFLIGVLIFATIVGNVGSMISNMN. The tract at residues 337–340 is selectivity filter; it reads TIGE. Positions 380–456 are C-linker; sequence ATRAEFQAKI…STLKKVRIFH (77 aa). At 380–664 the chain is on the cytoplasmic side; that stretch reads ATRAEFQAKI…SPELAAADEP (285 aa). The interval 460-580 is cyclic nucleotide-binding domain; the sequence is AGLLVELVLK…EERGREILMK (121 aa). Residues Gly-520, Ser-523, Arg-536, and Thr-537 each coordinate 3',5'-cyclic GMP. Positions 536 and 537 each coordinate 3',5'-cyclic AMP. Residues 597–651 are a coiled coil; it reads VQEKLGQLETNMETLYTRFGRLLAEYTGAQQKLKQRITVLETKMKQNNEDDYLSD. Residues 641–664 form a disordered region; the sequence is KQNNEDDYLSDGMNSPELAAADEP.

The protein belongs to the cyclic nucleotide-gated cation channel (TC 1.A.1.5) family. CNGA2 subfamily. As to quaternary structure, the olfactory cyclic nucleotide-gated channel is an heterotetramer composed of CNGA2, CNGA4 and CNGB1b subunits with 2:1:1 stoichiometry.

Its subcellular location is the cell projection. The protein localises to the cilium membrane. The catalysed reaction is Ca(2+)(in) = Ca(2+)(out). It carries out the reaction Na(+)(in) = Na(+)(out). The enzyme catalyses K(+)(in) = K(+)(out). It catalyses the reaction NH4(+)(in) = NH4(+)(out). The catalysed reaction is Rb(+)(in) = Rb(+)(out). It carries out the reaction Li(+)(in) = Li(+)(out). The enzyme catalyses Cs(+)(in) = Cs(+)(out). Its function is as follows. Pore-forming subunit of the olfactory cyclic nucleotide-gated channel. Operates in the cilia of olfactory sensory neurons where chemical stimulation of the odorant is converted to an electrical signal. Mediates odorant-induced cAMP-dependent Ca(2+) influx triggering neuron depolarization. The rise of intracellular Ca(2+) levels potentiates the olfactory response by activating Ca(2+)-dependent Cl(-) channels, but it also serves as a negative feedback signal to desensitize the channel for rapid adaptation to odorants. Conducts cAMP- and cGMP-gated ion currents, with permeability for monovalent and divalent cations. The sequence is that of Cyclic nucleotide-gated channel alpha-2 from Homo sapiens (Human).